The primary structure comprises 473 residues: Bifunctional protein HldE (473 aa).

The segment at 1–317 (MKLSMPRFDQ…RRAVQREQGS (317 aa)) is ribokinase. ATP is bound at residue 194–197 (NLSE). The active site involves D263. The cytidylyltransferase stretch occupies residues 343-473 (FTNGCFDILH…TAIVEKIRQR (131 aa)).

In the N-terminal section; belongs to the carbohydrate kinase PfkB family. The protein in the C-terminal section; belongs to the cytidylyltransferase family. In terms of assembly, homodimer.

The enzyme catalyses D-glycero-beta-D-manno-heptose 7-phosphate + ATP = D-glycero-beta-D-manno-heptose 1,7-bisphosphate + ADP + H(+). The catalysed reaction is D-glycero-beta-D-manno-heptose 1-phosphate + ATP + H(+) = ADP-D-glycero-beta-D-manno-heptose + diphosphate. It participates in nucleotide-sugar biosynthesis; ADP-L-glycero-beta-D-manno-heptose biosynthesis; ADP-L-glycero-beta-D-manno-heptose from D-glycero-beta-D-manno-heptose 7-phosphate: step 1/4. It functions in the pathway nucleotide-sugar biosynthesis; ADP-L-glycero-beta-D-manno-heptose biosynthesis; ADP-L-glycero-beta-D-manno-heptose from D-glycero-beta-D-manno-heptose 7-phosphate: step 3/4. Functionally, catalyzes the phosphorylation of D-glycero-D-manno-heptose 7-phosphate at the C-1 position to selectively form D-glycero-beta-D-manno-heptose-1,7-bisphosphate. In terms of biological role, catalyzes the ADP transfer from ATP to D-glycero-beta-D-manno-heptose 1-phosphate, yielding ADP-D-glycero-beta-D-manno-heptose. The chain is Bifunctional protein HldE from Pseudomonas aeruginosa (strain LESB58).